The chain runs to 105 residues: Insulin (105 aa).

An N-terminal signal peptide occupies residues 1–24 (MALWTRLVPLLALLALWAPAPAHA). Disulfide bonds link cysteine 31/cysteine 91, cysteine 43/cysteine 104, and cysteine 90/cysteine 95. A propeptide spans 57 to 82 (EVEGPQVGALELAGGPGAGGLEGPPQ) (c peptide).

Belongs to the insulin family. Heterodimer of a B chain and an A chain linked by two disulfide bonds.

The protein resides in the secreted. In terms of biological role, insulin decreases blood glucose concentration. It increases cell permeability to monosaccharides, amino acids and fatty acids. It accelerates glycolysis, the pentose phosphate cycle, and glycogen synthesis in liver. The chain is Insulin (INS) from Ovis aries (Sheep).